A 269-amino-acid polypeptide reads, in one-letter code: NAD-capped RNA hydrolase NudC (269 aa).

Arg74 lines the substrate pocket. Cys103, Cys106, Cys121, and Cys124 together coordinate Zn(2+). Tyr129 is a binding site for substrate. Residues Pro130–Thr253 form the Nudix hydrolase domain. A divalent metal cation is bound by residues Ala163, Glu179, and Glu183. The Nudix box motif lies at Gly164–Gly185. Gln197 to Ser204 is a binding site for substrate. Residue Glu224 coordinates a divalent metal cation. Substrate is bound at residue Ala246.

This sequence belongs to the Nudix hydrolase family. NudC subfamily. Homodimer. Mg(2+) is required as a cofactor. It depends on Mn(2+) as a cofactor. The cofactor is Zn(2+).

It carries out the reaction a 5'-end NAD(+)-phospho-ribonucleoside in mRNA + H2O = a 5'-end phospho-adenosine-phospho-ribonucleoside in mRNA + beta-nicotinamide D-ribonucleotide + 2 H(+). The enzyme catalyses NAD(+) + H2O = beta-nicotinamide D-ribonucleotide + AMP + 2 H(+). The catalysed reaction is NADH + H2O = reduced beta-nicotinamide D-ribonucleotide + AMP + 2 H(+). MRNA decapping enzyme that specifically removes the nicotinamide adenine dinucleotide (NAD) cap from a subset of mRNAs by hydrolyzing the diphosphate linkage to produce nicotinamide mononucleotide (NMN) and 5' monophosphate mRNA. The NAD-cap is present at the 5'-end of some mRNAs and stabilizes RNA against 5'-processing. Has preference for mRNAs with a 5'-end purine. Catalyzes the hydrolysis of a broad range of dinucleotide pyrophosphates. The sequence is that of NAD-capped RNA hydrolase NudC from Vibrio atlanticus (strain LGP32) (Vibrio splendidus (strain Mel32)).